We begin with the raw amino-acid sequence, 217 residues long: Small ribosomal subunit protein uS3 (217 aa).

The KH type-2 domain maps to 40–110; sequence IRDLINKGFN…EVYINIHEVR (71 aa).

This sequence belongs to the universal ribosomal protein uS3 family. Part of the 30S ribosomal subunit. Forms a tight complex with proteins S10 and S14.

Functionally, binds the lower part of the 30S subunit head. Binds mRNA in the 70S ribosome, positioning it for translation. This chain is Small ribosomal subunit protein uS3, found in Rickettsia africae (strain ESF-5).